A 371-amino-acid polypeptide reads, in one-letter code: Methylthioribose-1-phosphate isomerase (371 aa).

Substrate is bound by residues 53–55 (RGA), arginine 90, and glutamine 203. Aspartate 243 (proton donor) is an active-site residue. 253–254 (NK) is a binding site for substrate.

It belongs to the eIF-2B alpha/beta/delta subunits family. MtnA subfamily.

It carries out the reaction 5-(methylsulfanyl)-alpha-D-ribose 1-phosphate = 5-(methylsulfanyl)-D-ribulose 1-phosphate. It catalyses the reaction 5-deoxy-alpha-D-ribose 1-phosphate = 5-deoxy-D-ribulose 1-phosphate. The protein operates within amino-acid biosynthesis; L-methionine biosynthesis via salvage pathway; L-methionine from S-methyl-5-thio-alpha-D-ribose 1-phosphate: step 1/6. Functionally, catalyzes the interconversion of methylthioribose-1-phosphate (MTR-1-P) into methylthioribulose-1-phosphate (MTRu-1-P). Also catalyzes the interconversion of 5-deoxyribose 1-phosphate and 5-deoxyribulose 1-phosphate. Part of a bifunctional DHAP-shunt salvage pathway for SAM by-products. This Escherichia coli O45:K1 (strain S88 / ExPEC) protein is Methylthioribose-1-phosphate isomerase.